A 606-amino-acid chain; its full sequence is Neutral/alkaline invertase 3, chloroplastic (606 aa).

Residues 1 to 58 (MGIAEVALHSMPGAFAAHSPASNLPLAADAARGRRRRSANSLHSSRALQGPVRFPGLR) constitute a chloroplast transit peptide. A disordered region spans residues 97–126 (RVPGQAVGGNGSVNGSAAKPPPQRRKASSV).

The protein belongs to the glycosyl hydrolase 100 family.

It localises to the plastid. Its subcellular location is the chloroplast. It catalyses the reaction Hydrolysis of terminal non-reducing beta-D-fructofuranoside residues in beta-D-fructofuranosides.. Its function is as follows. Mitochondrial invertase that cleaves sucrose into glucose and fructose. This is Neutral/alkaline invertase 3, chloroplastic from Oryza sativa subsp. japonica (Rice).